The primary structure comprises 348 residues: Mannonate dehydratase (348 aa).

This sequence belongs to the mannonate dehydratase family. Fe(2+) serves as cofactor. Mn(2+) is required as a cofactor.

The enzyme catalyses D-mannonate = 2-dehydro-3-deoxy-D-gluconate + H2O. The protein operates within carbohydrate metabolism; pentose and glucuronate interconversion. Functionally, catalyzes the dehydration of D-mannonate. This Streptococcus agalactiae serotype Ia (strain ATCC 27591 / A909 / CDC SS700) protein is Mannonate dehydratase.